The following is a 98-amino-acid chain: NADH-ubiquinone oxidoreductase chain 4L (98 aa).

The next 3 membrane-spanning stretches (helical) occupy residues 1–21, 28–48, and 59–79; these read MTSI…GVLI, STLL…ALLI, and APLI…ALLV.

Belongs to the complex I subunit 4L family. Core subunit of respiratory chain NADH dehydrogenase (Complex I) which is composed of 45 different subunits.

The protein resides in the mitochondrion inner membrane. The enzyme catalyses a ubiquinone + NADH + 5 H(+)(in) = a ubiquinol + NAD(+) + 4 H(+)(out). In terms of biological role, core subunit of the mitochondrial membrane respiratory chain NADH dehydrogenase (Complex I) which catalyzes electron transfer from NADH through the respiratory chain, using ubiquinone as an electron acceptor. Part of the enzyme membrane arm which is embedded in the lipid bilayer and involved in proton translocation. The polypeptide is NADH-ubiquinone oxidoreductase chain 4L (MT-ND4L) (Vombatus ursinus (Common wombat)).